A 376-amino-acid polypeptide reads, in one-letter code: MEDGFGMYSHSMSCPSTASTSFSSASSSAYDPFTPSSRRSTPNELSLDLDGSCSYAAHQHSLELTPPTTSMAKYFMGQTIKQEPEQMSFGSLPTTPMKKVDGGFAAEYDLIDMNMASHHSMGTITPSNSFGLHTISPETAMGPTSYMMTPTQSLSGSEIAESSSSWSVTNESPINFFQQPKDLSFHDMDSLDLDERHHHHHNHHQHHHAQQSPMGQHFQLHSNTGASPNSMRVQRKMMLHEAQRKTSELQRAQIRESRKRAGKPESGAVDVVRRAMCKCDYPGCNKAFRRNEHLKRHKQTFHGEGPNRFSCEFCGKDQFNRQDNLNNHRKLHARPNSRNRGVEFIPEAVPIIEHEERSRKRRAPPKSKAEKRDYDF.

Residues 20 to 29 (TSFSSASSSA) are compositionally biased toward low complexity. Disordered stretches follow at residues 20-47 (TSFS…ELSL), 197-229 (HHHH…ASPN), and 241-267 (EAQR…PESG). The segment covering 34–44 (TPSSRRSTPNE) has biased composition (polar residues). Positions 197 to 209 (HHHHHNHHQHHHA) are enriched in basic residues. The segment covering 219 to 229 (QLHSNTGASPN) has biased composition (polar residues). Residues 241–256 (EAQRKTSELQRAQIRE) are compositionally biased toward basic and acidic residues. The C2H2-type 1; degenerate zinc-finger motif lies at 277–301 (CKCDYPGCNKAFRRNEHLKRHKQTF). The C2H2-type 2 zinc-finger motif lies at 309-332 (FSCEFCGKDQFNRQDNLNNHRKLH). The disordered stretch occupies residues 351–376 (IIEHEERSRKRRAPPKSKAEKRDYDF). Basic and acidic residues predominate over residues 367–376 (SKAEKRDYDF).

The protein resides in the nucleus. In terms of biological role, brlA, abaA and wetA are pivotal regulators of conidiophore development and conidium maturation. They act individually and together to regulate their own expression and that of numerous other sporulation-specific genes. Binds promoters of target genes at brlA response elements (BREs) containing the conserved sequence 5'-(C/A)(A/G)AGGG(G/A)-3'. The polypeptide is C2H2 type master regulator of conidiophore development brlA (Hapsidospora chrysogena (Acremonium chrysogenum)).